The sequence spans 249 residues: tRNA pseudouridine synthase A (249 aa).

The active-site Nucleophile is the aspartate 52. Tyrosine 111 provides a ligand contact to substrate.

It belongs to the tRNA pseudouridine synthase TruA family. As to quaternary structure, homodimer.

It carries out the reaction uridine(38/39/40) in tRNA = pseudouridine(38/39/40) in tRNA. Functionally, formation of pseudouridine at positions 38, 39 and 40 in the anticodon stem and loop of transfer RNAs. This Brachyspira hyodysenteriae (strain ATCC 49526 / WA1) protein is tRNA pseudouridine synthase A.